Consider the following 337-residue polypeptide: GTPase Obg (337 aa).

Residues 1-158 enclose the Obg domain; sequence MFIDEVRILV…KRLRLELKLL (158 aa). 2 stretches are compositionally biased toward basic and acidic residues: residues 61-74 and 137-146; these read NPEHKAERGRHGEG and PTEHEPGRPG. Disordered stretches follow at residues 61-83 and 119-146; these read NPEHKAERGRHGEGSQRTGAEGR and GGRGGRGNQHFATPTHQAPTEHEPGRPG. One can recognise an OBG-type G domain in the interval 159-330; sequence ADVGLVGFPN…LKHAMADRVL (172 aa). GTP contacts are provided by residues 165-172, 190-194, 212-215, 282-285, and 311-313; these read GFPNAGKS, FTTLE, DIPG, TKMD, and SSA. Residues S172 and T192 each contribute to the Mg(2+) site.

It belongs to the TRAFAC class OBG-HflX-like GTPase superfamily. OBG GTPase family. In terms of assembly, monomer. It depends on Mg(2+) as a cofactor.

It is found in the cytoplasm. In terms of biological role, an essential GTPase which binds GTP, GDP and possibly (p)ppGpp with moderate affinity, with high nucleotide exchange rates and a fairly low GTP hydrolysis rate. Plays a role in control of the cell cycle, stress response, ribosome biogenesis and in those bacteria that undergo differentiation, in morphogenesis control. The chain is GTPase Obg from Solibacter usitatus (strain Ellin6076).